The sequence spans 136 residues: Large ribosomal subunit protein uL16 (136 aa).

Belongs to the universal ribosomal protein uL16 family. In terms of assembly, part of the 50S ribosomal subunit.

In terms of biological role, binds 23S rRNA and is also seen to make contacts with the A and possibly P site tRNAs. The sequence is that of Large ribosomal subunit protein uL16 from Pseudoalteromonas atlantica (strain T6c / ATCC BAA-1087).